The following is a 465-amino-acid chain: GTPase Der (465 aa).

2 consecutive EngA-type G domains span residues 3–166 and 184–358; these read FLVA…LNEY and IHFS…ACAS. GTP is bound by residues 9–16, 56–60, 118–121, 190–197, 237–241, and 302–305; these read GRANVGKS, DTGGI, NKVD, GRPNVGKS, DTAGV, and NKWD. The region spanning 359–443 is the KH-like domain; that stretch reads KKITTADATR…PIVFEFKQSE (85 aa). A disordered region spans residues 446 to 465; that stretch reads FADRKNKRSKDEGSKSKKVK.

The protein belongs to the TRAFAC class TrmE-Era-EngA-EngB-Septin-like GTPase superfamily. EngA (Der) GTPase family. Associates with the 50S ribosomal subunit.

Functionally, GTPase that plays an essential role in the late steps of ribosome biogenesis. This Francisella tularensis subsp. tularensis (strain FSC 198) protein is GTPase Der.